A 107-amino-acid chain; its full sequence is Quaternary ammonium compound-resistance protein QacC (107 aa).

3 consecutive transmembrane segments (helical) span residues 26–46 (FSKF…FYFL), 57–77 (ITYA…SIII), and 84–104 (LITI…NIFG).

The protein belongs to the drug/metabolite transporter (DMT) superfamily. Small multidrug resistance (SMR) (TC 2.A.7.1) family.

The protein resides in the cell membrane. Functionally, multidrug exporter. Is implicated for the resistance to bacteriocidal quaternary ammonium compounds. The sequence is that of Quaternary ammonium compound-resistance protein QacC from Staphylococcus sp. (strain ST827).